The sequence spans 407 residues: Membrane protein MosC (407 aa).

The interval 1-24 is disordered; that stretch reads MTRTSPRHHAPSETKRRVPMGGVH. Helical transmembrane passes span 31-51, 69-89, 109-129, 157-177, 186-206, 225-245, 255-275, 290-310, 316-336, 347-367, and 377-397; these read LTIT…AAWA, GVLL…AGYF, ALVL…IVLF, AFLH…FGVI, SVTL…HLLD, LLMF…IAEW, QVTD…MIAG, ALIA…LFMP, LAGF…IFSE, VGLT…PPII, and GRAL…SVFF.

The protein localises to the cell membrane. Functionally, may be a membrane transport protein that could either transport a precursor for rhizopine biosynthesis into bacteroids or the finished product from the bacteroids. This is Membrane protein MosC (mosC) from Rhizobium meliloti (Ensifer meliloti).